Reading from the N-terminus, the 700-residue chain is Elongation factor G 1 (700 aa).

The tr-type G domain maps to 8–290 (ERYRNIGISA…AVIDYLPSPA (283 aa)). Residues 17–24 (AHIDAGKT), 88–92 (DTPGH), and 142–145 (NKMD) each bind GTP.

Belongs to the TRAFAC class translation factor GTPase superfamily. Classic translation factor GTPase family. EF-G/EF-2 subfamily.

Its subcellular location is the cytoplasm. Its function is as follows. Catalyzes the GTP-dependent ribosomal translocation step during translation elongation. During this step, the ribosome changes from the pre-translocational (PRE) to the post-translocational (POST) state as the newly formed A-site-bound peptidyl-tRNA and P-site-bound deacylated tRNA move to the P and E sites, respectively. Catalyzes the coordinated movement of the two tRNA molecules, the mRNA and conformational changes in the ribosome. The polypeptide is Elongation factor G 1 (Bordetella bronchiseptica (strain ATCC BAA-588 / NCTC 13252 / RB50) (Alcaligenes bronchisepticus)).